Here is a 178-residue protein sequence, read N- to C-terminus: MACRVMEVLLRVLAILLSIAGALVMAKDKQDTFVMLGTVPVPLYARHSYVEAFVFLVYANGIVAIYCFIAVLLSLLAKSRVLAGLLFFMDQALAYLLLAAAAASTEVAYIAKRGEKKLVWGEVCSNFEHFCNLVGVSLVLTFLSVLVLVTLAILSGKRLFGHPPLCAPPSTPPVHQGV.

At Met-1–Arg-4 the chain is on the cytoplasmic side. Residues Val-5–Met-25 traverse the membrane as a helical segment. At Ala-26–Ala-52 the chain is on the extracellular side. The chain crosses the membrane as a helical span at residues Phe-53–Leu-73. Topologically, residues Ser-74–Arg-80 are cytoplasmic. A helical membrane pass occupies residues Val-81–Ala-101. The Extracellular portion of the chain corresponds to Ala-102–Asn-132. The chain crosses the membrane as a helical span at residues Leu-133–Ile-153. Residues Leu-154–Val-178 lie on the Cytoplasmic side of the membrane.

The protein belongs to the Casparian strip membrane proteins (CASP) family. In terms of assembly, homodimer and heterodimers.

It localises to the cell membrane. This is CASP-like protein 2U3 from Pteridium aquilinum subsp. aquilinum (Bracken fern).